Reading from the N-terminus, the 540-residue chain is Glucose-6-phosphate isomerase (540 aa).

Glu346 acts as the Proton donor in catalysis. Active-site residues include His377 and Lys505.

This sequence belongs to the GPI family.

The protein localises to the cytoplasm. The catalysed reaction is alpha-D-glucose 6-phosphate = beta-D-fructose 6-phosphate. Its pathway is carbohydrate biosynthesis; gluconeogenesis. It functions in the pathway carbohydrate degradation; glycolysis; D-glyceraldehyde 3-phosphate and glycerone phosphate from D-glucose: step 2/4. Functionally, catalyzes the reversible isomerization of glucose-6-phosphate to fructose-6-phosphate. The chain is Glucose-6-phosphate isomerase from Francisella tularensis subsp. holarctica (strain FTNF002-00 / FTA).